The following is a 318-amino-acid chain: Small ribosomal subunit protein RACK1 (318 aa).

7 WD repeats span residues 11–44 (GHRG…LSWG), 65–95 (GHSA…RLWN), 107–137 (GHTK…RVWN), 150–182 (AHTD…KVWD), 194–224 (GHTN…RLWD), 235–264 (AAGA…RIFD), and 282–315 (KKIV…WGVS).

This sequence belongs to the WD repeat G protein beta family. Ribosomal protein RACK1 subfamily.

The polypeptide is Small ribosomal subunit protein RACK1 (Trypanosoma brucei brucei).